We begin with the raw amino-acid sequence, 186 residues long: Large ribosomal subunit protein uL10 (186 aa).

Belongs to the universal ribosomal protein uL10 family. Part of the ribosomal stalk of the 50S ribosomal subunit. The N-terminus interacts with L11 and the large rRNA to form the base of the stalk. The C-terminus forms an elongated spine to which L12 dimers bind in a sequential fashion forming a multimeric L10(L12)X complex.

Forms part of the ribosomal stalk, playing a central role in the interaction of the ribosome with GTP-bound translation factors. This is Large ribosomal subunit protein uL10 from Nitrosococcus oceani (strain ATCC 19707 / BCRC 17464 / JCM 30415 / NCIMB 11848 / C-107).